A 245-amino-acid polypeptide reads, in one-letter code: tRNA (guanine-N(1)-)-methyltransferase (245 aa).

Residues Gly-113 and 133–138 (IGDYVL) contribute to the S-adenosyl-L-methionine site.

Belongs to the RNA methyltransferase TrmD family. As to quaternary structure, homodimer.

Its subcellular location is the cytoplasm. It carries out the reaction guanosine(37) in tRNA + S-adenosyl-L-methionine = N(1)-methylguanosine(37) in tRNA + S-adenosyl-L-homocysteine + H(+). In terms of biological role, specifically methylates guanosine-37 in various tRNAs. This Anoxybacillus flavithermus (strain DSM 21510 / WK1) protein is tRNA (guanine-N(1)-)-methyltransferase.